Here is a 427-residue protein sequence, read N- to C-terminus: Enolase (427 aa).

Gln-163 lines the (2R)-2-phosphoglycerate pocket. Catalysis depends on Glu-205, which acts as the Proton donor. Mg(2+) is bound by residues Asp-242, Glu-283, and Asp-310. Residues Lys-335, Arg-364, Ser-365, and Lys-386 each coordinate (2R)-2-phosphoglycerate. The active-site Proton acceptor is the Lys-335.

Belongs to the enolase family. Mg(2+) serves as cofactor.

Its subcellular location is the cytoplasm. The protein localises to the secreted. The protein resides in the cell surface. It catalyses the reaction (2R)-2-phosphoglycerate = phosphoenolpyruvate + H2O. The protein operates within carbohydrate degradation; glycolysis; pyruvate from D-glyceraldehyde 3-phosphate: step 4/5. Its function is as follows. Catalyzes the reversible conversion of 2-phosphoglycerate (2-PG) into phosphoenolpyruvate (PEP). It is essential for the degradation of carbohydrates via glycolysis. The sequence is that of Enolase from Salinispora tropica (strain ATCC BAA-916 / DSM 44818 / JCM 13857 / NBRC 105044 / CNB-440).